Reading from the N-terminus, the 544-residue chain is Putative pentatricopeptide repeat-containing protein At5g59200, chloroplastic (544 aa).

The tract at residues 1–21 (MISSLAAITGGPSTFRRDPDS) is disordered. The N-terminal 25 residues, 1–25 (MISSLAAITGGPSTFRRDPDSNTLR), are a transit peptide targeting the chloroplast. PPR repeat units lie at residues 60-90 (DAFV…VSNP), 91-125 (NVYL…SVLP), 127-156 (NYVI…GFGS), 157-187 (SRSV…MPDR), 188-218 (DHVA…VKIK), 219-253 (DTVC…NVSA), 254-288 (NEFT…RMEL), 289-319 (SNFV…MRDK), 320-354 (DVIS…GFRP), 355-385 (NQVT…MKRV), and 391-421 (QIEH…IPIE). The tract at residues 426–501 (MLGTLLSACK…EPGCSTIEVD (76 aa)) is type E motif. Residues 502–532 (NQIHEFLVGDIAHPHKEAIYQRLQELNRILR) form a type E(+) motif region.

This sequence belongs to the PPR family. PCMP-E subfamily.

The protein resides in the plastid. It is found in the chloroplast. Functionally, involved in RNA editing event in chloroplasts. Required for the editing of a single site in rpl23 transcript. This is Putative pentatricopeptide repeat-containing protein At5g59200, chloroplastic (PCMP-E41) from Arabidopsis thaliana (Mouse-ear cress).